The primary structure comprises 310 residues: Ninja-family protein 3 (310 aa).

Disordered regions lie at residues 1–29, 68–140, and 156–215; these read MASR…GEPD, SLPG…DDAQ, and DQGN…EQPP. The segment covering 99–108 has biased composition (basic and acidic residues); it reads ERWRRREMQS. Polar residues-rich tracts occupy residues 156–166 and 176–193; these read DQGNASSSMPE and KSTS…QNKS.

Belongs to the Ninja family.

It is found in the nucleus. The polypeptide is Ninja-family protein 3 (AFP-D1) (Triticum aestivum (Wheat)).